The primary structure comprises 574 residues: Sentrin-specific protease 3 (574 aa).

The interval 1–125 (MKETIQGTGS…PTHRKTCSQR (125 aa)) is disordered. A phosphoserine mark is found at serine 54, serine 73, and serine 75. Over residues 74–93 (ASEEEEEEEEEEDEDEEEEV) the composition is skewed to acidic residues. The segment covering 112–125 (RPSRPTHRKTCSQR) has biased composition (basic residues). 2 short sequence motifs (nuclear localization signal) span residues 125 to 128 (RRRR) and 153 to 159 (RHRGRRR). Positions 161-181 (LAHPKNHLSPQQGGATPQVPS) are disordered. Position 169 is a phosphoserine (serine 169). A Phosphothreonine modification is found at threonine 176. 4 positions are modified to phosphoserine: serine 181, serine 188, serine 212, and serine 232. Residues 386–543 (HVLTMDDLGT…AFVLQYCKHL (158 aa)) form a protease region. Active-site residues include histidine 465 and aspartate 482. Cysteine 532 (nucleophile) is an active-site residue.

The protein belongs to the peptidase C48 family. As to quaternary structure, component of some MLL1/MLL complex, at least composed of the core components KMT2A/MLL1, ASH2L, HCFC1/HCF1, WDR5 and RBBP5, as well as the facultative components BACC1, CHD8, E2F6, HSP70, INO80C, KANSL1, LAS1L, MAX, MCRS1, MGA, MYST1/MOF, PELP1, PHF20, PRP31, RING2, RUVB1/TIP49A, RUVB2/TIP49B, SENP3, TAF1, TAF4, TAF6, TAF7, TAF9 and TEX10. Interacts with EP300, NPM1 and CDCA8. Component of the 5FMC complex, at least composed of PELP1, LAS1L, TEX10, WDR18 and SENP3; the complex interacts with methylated CHTOP and ZNF148. Interacts with NOL9. Interacts with CCAR2.

The protein localises to the nucleus. The protein resides in the nucleolus. It localises to the nucleoplasm. Its subcellular location is the cytoplasm. With respect to regulation, on oxidative stress, SENP3 degradation is blocked by inhibition of its ubiquitination, which stabilizes it as it accumulates in the nucleoplasm. Functionally, protease that releases SUMO2 and SUMO3 monomers from sumoylated substrates, but has only weak activity against SUMO1 conjugates. Deconjugates SUMO2 from MEF2D, which increases its transcriptional activation capability. Deconjugates SUMO2 and SUMO3 from CDCA8. Redox sensor that, when redistributed into nucleoplasm, can act as an effector to enhance HIF1A transcriptional activity by desumoylating EP300. Required for rRNA processing through deconjugation of SUMO2 and SUMO3 from nucleophosmin, NPM1. Plays a role in the regulation of sumoylation status of ZNF148. Functions as a component of the Five Friends of Methylated CHTOP (5FMC) complex; the 5FMC complex is recruited to ZNF148 by methylated CHTOP, leading to desumoylation of ZNF148 and subsequent transactivation of ZNF148 target genes. Deconjugates SUMO2 from KAT5. Catalyzes desumoylation of MRE11. The polypeptide is Sentrin-specific protease 3 (Homo sapiens (Human)).